A 294-amino-acid chain; its full sequence is Probable endonuclease 4 (294 aa).

Residues His-78, His-118, Glu-157, Asp-191, His-194, His-228, Asp-241, His-243, and Glu-273 each coordinate Zn(2+).

Belongs to the AP endonuclease 2 family. Requires Zn(2+) as cofactor.

It catalyses the reaction Endonucleolytic cleavage to 5'-phosphooligonucleotide end-products.. Functionally, endonuclease IV plays a role in DNA repair. It cleaves phosphodiester bonds at apurinic or apyrimidinic (AP) sites, generating a 3'-hydroxyl group and a 5'-terminal sugar phosphate. This is Probable endonuclease 4 from Streptomyces coelicolor (strain ATCC BAA-471 / A3(2) / M145).